The primary structure comprises 506 residues: Maturase K (506 aa).

It belongs to the intron maturase 2 family. MatK subfamily.

It localises to the plastid. The protein localises to the chloroplast. Usually encoded in the trnK tRNA gene intron. Probably assists in splicing its own and other chloroplast group II introns. This is Maturase K from Andromeda polifolia (Bog rosemary).